A 518-amino-acid polypeptide reads, in one-letter code: GMP synthase [glutamine-hydrolyzing] (518 aa).

Residues 13–203 (KIIVLDFGSQ…ALNVCGCKGD (191 aa)) enclose the Glutamine amidotransferase type-1 domain. Residue Cys90 is the Nucleophile of the active site. Active-site residues include His177 and Glu179. A GMPS ATP-PPase domain is found at 204–393 (WTMENFSEVE…LGMPDAIVWR (190 aa)). 231–237 (SGGVDSS) contacts ATP.

In terms of assembly, homodimer.

It catalyses the reaction XMP + L-glutamine + ATP + H2O = GMP + L-glutamate + AMP + diphosphate + 2 H(+). It participates in purine metabolism; GMP biosynthesis; GMP from XMP (L-Gln route): step 1/1. Functionally, catalyzes the synthesis of GMP from XMP. This chain is GMP synthase [glutamine-hydrolyzing], found in Listeria monocytogenes serovar 1/2a (strain ATCC BAA-679 / EGD-e).